A 566-amino-acid chain; its full sequence is MEVLEEPAPGPGGADAAERRGLRRLLLSGFQEELRALLVLAGPAFLAQLMMFLISFISSVFCGHLGKLELDAVTLAIAVINVTGISVGHGLSSACDTLISQTYGSQNLKHVGVILQRGTLILLLCCFPCWALFINTEQILLLFRQDPDVSRLTQTYVMVFIPALPAAFLYTLQVKYLLNQGIVLPQVITGIAANLVNALANYLFLHQLHLGVMGSALANTISQFALAIFLFLYILWRKLHHATWGGWSWECLQDWASFLQLAIPSMLMLCIEWWAYEVGSFLSGILGMVELGAQSITYELAIIVYMIPAGFSVAANVRVGNALGAGNIDQAKKSSAISLIVTELFAVTFCVLLLGCKDLVGYIFTTDWDIVALVAQVVPIYAVSHLFEALACTCGGVLRGTGNQKVGAIVNAIGYYVIGLPIGISLMFVAKLGVIGLWSGIIICSVCQTSCFLVFIARLNWKLACQQAQVHANLKVNVALNSAVSQEPAHPVGPESHGEIMMTDLEKKDEIQLDQQMNQQQALPVHPKDSNKLSGKQLALRRGLLFLGVVLVLVGGILVRVYIRTE.

Met-1 is modified (N-acetylmethionine). The next 13 membrane-spanning stretches (helical) occupy residues 37–57 (LLVL…ISFI), 72–92 (AVTL…HGLS), 120–140 (LILL…EQIL), 152–172 (LTQT…LYTL), 176–196 (YLLN…ANLV), 216–236 (ALAN…YILW), 257–276 (SFLQ…WWAY), 295–315 (SITY…SVAA), 336–356 (AISL…LLGC), 370–390 (IVAL…FEAL), 409–429 (IVNA…LMFV), 437–457 (LWSG…VFIA), and 543–563 (GLLF…RVYI).

This sequence belongs to the multi antimicrobial extrusion (MATE) (TC 2.A.66.1) family. As to expression, highly expressed in kidney and placenta, moderately in stomach, colon, lung, spleen, skeletal muscle and prostate, and slightly in spleen. In the kidney, found in medulla and cortex, especially in the proximal convoluted and straight tubules. No expression was observed in heart, brain, small intestine and liver. Expressed in Sertoli cells in testis.

The protein localises to the cell membrane. The protein resides in the apical cell membrane. The enzyme catalyses thiamine(out) + H(+)(in) = thiamine(in) + H(+)(out). It carries out the reaction estrone 3-sulfate(in) + H(+)(out) = estrone 3-sulfate(out) + H(+)(in). It catalyses the reaction creatinine(in) + H(+)(out) = creatinine(out) + H(+)(in). The catalysed reaction is agmatine(in) + H(+)(out) = agmatine(out) + H(+)(in). Functionally, multidrug efflux pump that functions as a H(+)/organic cation antiporter. Plays a physiological role in the excretion of cationic compounds including endogenous metabolites, drugs, toxins through the kidney and liver, into urine and bile respectively. Mediates the efflux of endogenous compounds such as creatinine, vitamin B1/thiamine, agmatine and estrone-3-sulfate. May also contribute to regulate the transport of cationic compounds in testis across the blood-testis-barrier. The protein is Multidrug and toxin extrusion protein 1 (Slc47a1) of Rattus norvegicus (Rat).